Consider the following 183-residue polypeptide: ATP-dependent protease subunit HslV (183 aa).

Thr-13 is a catalytic residue. Na(+)-binding residues include Gly-168, Cys-171, and Thr-174.

This sequence belongs to the peptidase T1B family. HslV subfamily. As to quaternary structure, a double ring-shaped homohexamer of HslV is capped on each side by a ring-shaped HslU homohexamer. The assembly of the HslU/HslV complex is dependent on binding of ATP.

It is found in the cytoplasm. The catalysed reaction is ATP-dependent cleavage of peptide bonds with broad specificity.. Its activity is regulated as follows. Allosterically activated by HslU binding. In terms of biological role, protease subunit of a proteasome-like degradation complex believed to be a general protein degrading machinery. The chain is ATP-dependent protease subunit HslV from Xanthomonas euvesicatoria pv. vesicatoria (strain 85-10) (Xanthomonas campestris pv. vesicatoria).